The primary structure comprises 136 residues: Single-stranded DNA-binding protein 1 (136 aa).

Residues 4-109 enclose the SSB domain; that stretch reads LNKMQLIGNL…IMAKEMQMLG (106 aa). Residues 109–136 form a disordered region; that stretch reads GKKQDNNKVGNARHGDALPADEDDYYDF. Residues 127-136 show a composition bias toward acidic residues; it reads PADEDDYYDF.

In terms of assembly, homotetramer.

The sequence is that of Single-stranded DNA-binding protein 1 (ssb1) from Xylella fastidiosa (strain 9a5c).